A 23-amino-acid polypeptide reads, in one-letter code: MSILPLVHAMANVRGDIEYLTEA.

Belongs to the LDH/MDH superfamily. MDH type 2 family.

The catalysed reaction is (S)-malate + NAD(+) = oxaloacetate + NADH + H(+). Its function is as follows. Catalyzes the reversible oxidation of malate to oxaloacetate. The polypeptide is Malate dehydrogenase (mdh) (Thermoleophilum album).